Reading from the N-terminus, the 381-residue chain is Succinyl-diaminopimelate desuccinylase (381 aa).

A Zn(2+)-binding site is contributed by histidine 71. Aspartate 73 is an active-site residue. A Zn(2+)-binding site is contributed by aspartate 104. Catalysis depends on glutamate 138, which acts as the Proton acceptor. 3 residues coordinate Zn(2+): glutamate 139, glutamate 167, and histidine 353.

This sequence belongs to the peptidase M20A family. DapE subfamily. Homodimer. Requires Zn(2+) as cofactor. It depends on Co(2+) as a cofactor.

The enzyme catalyses N-succinyl-(2S,6S)-2,6-diaminopimelate + H2O = (2S,6S)-2,6-diaminopimelate + succinate. Its pathway is amino-acid biosynthesis; L-lysine biosynthesis via DAP pathway; LL-2,6-diaminopimelate from (S)-tetrahydrodipicolinate (succinylase route): step 3/3. Catalyzes the hydrolysis of N-succinyl-L,L-diaminopimelic acid (SDAP), forming succinate and LL-2,6-diaminopimelate (DAP), an intermediate involved in the bacterial biosynthesis of lysine and meso-diaminopimelic acid, an essential component of bacterial cell walls. This chain is Succinyl-diaminopimelate desuccinylase, found in Shewanella piezotolerans (strain WP3 / JCM 13877).